The sequence spans 221 residues: Endo-1,4-beta-xylanase 1 (221 aa).

Residues 1-22 form the signal peptide; that stretch reads MKFFATIAALVVAAVAAPVAEA. A GH11 domain is found at 29–221; that stretch reads PMLIERAGPG…GTGSASVTVS (193 aa). Glutamate 114 (nucleophile) is an active-site residue. Glutamate 208 (proton donor) is an active-site residue.

It belongs to the glycosyl hydrolase 11 (cellulase G) family.

It is found in the secreted. The catalysed reaction is Endohydrolysis of (1-&gt;4)-beta-D-xylosidic linkages in xylans.. It participates in glycan degradation; xylan degradation. Functionally, endo-1,4-beta-xylanase involved in the hydrolysis of xylan, a major structural heterogeneous polysaccharide found in plant biomass representing the second most abundant polysaccharide in the biosphere, after cellulose. Hydrolyzes xylans from oat spelt and birchwood at similar rates, but it has no detectable activity toward Avicel or carboxymethyl cellulose. The sequence is that of Endo-1,4-beta-xylanase 1 (xynI) from Aureobasidium pullulans (Black yeast).